Consider the following 499-residue polypeptide: Phenylalanine--tRNA ligase alpha subunit (499 aa).

Residues Thr342, 381-383 (QID), and Phe422 contribute to the L-phenylalanine site. Glu424 contributes to the Mg(2+) binding site. Position 447 (Phe447) interacts with L-phenylalanine.

This sequence belongs to the class-II aminoacyl-tRNA synthetase family. Phe-tRNA synthetase alpha subunit type 2 subfamily. Tetramer of two alpha and two beta subunits. Mg(2+) serves as cofactor.

The protein localises to the cytoplasm. The enzyme catalyses tRNA(Phe) + L-phenylalanine + ATP = L-phenylalanyl-tRNA(Phe) + AMP + diphosphate + H(+). The chain is Phenylalanine--tRNA ligase alpha subunit from Pyrococcus horikoshii (strain ATCC 700860 / DSM 12428 / JCM 9974 / NBRC 100139 / OT-3).